We begin with the raw amino-acid sequence, 344 residues long: Olfactory receptor class A-like protein 4 (344 aa).

Over 1-10 (MSEVLTVDAV) the chain is Extracellular. Residues 11-31 (LFGLLVFSGIIGNIMVIYVVF) form a helical membrane-spanning segment. At 32–47 (DCAKLCASRHLPPSDT) the chain is on the cytoplasmic side. The helical transmembrane segment at 48-68 (ILVHLCLANLLTSVFRTVPIF) threads the bilayer. At 69 to 84 (VSDLGLQVWLTAGWCR) the chain is on the extracellular side. Residues Cys83 and Cys169 are joined by a disulfide bond. The chain crosses the membrane as a helical span at residues 85 to 105 (VFMLLWVWWRAVGCWVTLALS). The Cytoplasmic portion of the chain corresponds to 106-130 (AFHCATLRRQHVSMGPLGHSRERRR). The chain crosses the membrane as a helical span at residues 131 to 151 (VWVVLAVVWAANLLFSLPALV). The Extracellular portion of the chain corresponds to 152–186 (YTTQVRGNATVELMVISCTTRPLLGCVWEFPTFQQ). Asn159 carries an N-linked (GlcNAc...) asparagine glycan. Residues 187–207 (GYAFASSSLALNEVLPLVLMV) form a helical membrane-spanning segment. The Cytoplasmic segment spans residues 208–246 (GTNLATLQALGKHIRTVRAGGSTGAELDRHVSSERKAGH). A helical membrane pass occupies residues 247 to 267 (VIMALVALFVGCWVLQVAAVT). Topologically, residues 268–279 (YYNHNRGAHAEG) are extracellular. Residues 280–300 (LLTVAHFSASLFVGFSPLVVA) traverse the membrane as a helical segment. Over 301-344 (LGHGKLRRRISGILQSCMHRLKQTQDKPAEITEKDGRTTQSAMK) the chain is Cytoplasmic. Basic and acidic residues predominate over residues 324-337 (TQDKPAEITEKDGR). The interval 324-344 (TQDKPAEITEKDGRTTQSAMK) is disordered.

Belongs to the G-protein coupled receptor 1 family. As to expression, highly expressed in the olfactory rosette. Specifically localizes to crypt neurons in the olfactory neuroepithelium. Colocalizes with the inhibitory G-protein gnaia in crypt neurons. Not detected in other tissues tested.

It localises to the cell membrane. Its function is as follows. Probable olfactory receptor. The protein is Olfactory receptor class A-like protein 4 (ora4) of Danio rerio (Zebrafish).